A 91-amino-acid polypeptide reads, in one-letter code: Cell division protein FtsB (91 aa).

The Cytoplasmic portion of the chain corresponds to methionine 1–tryptophan 3. The chain crosses the membrane as a helical span at residues proline 4–leucine 21. Topologically, residues glycine 22–histidine 91 are periplasmic. A coiled-coil region spans residues arginine 28–arginine 72.

This sequence belongs to the FtsB family. Part of a complex composed of FtsB, FtsL and FtsQ.

It is found in the cell inner membrane. In terms of biological role, essential cell division protein. May link together the upstream cell division proteins, which are predominantly cytoplasmic, with the downstream cell division proteins, which are predominantly periplasmic. The polypeptide is Cell division protein FtsB (Azoarcus sp. (strain BH72)).